Here is a 286-residue protein sequence, read N- to C-terminus: Protein NipSnap homolog 2 (286 aa).

A mitochondrion-targeting transit peptide spans 1 to 40 (MATRVLHSSCSGLYRAAGPARGKGHATAVIRSLSASHNRP).

Belongs to the NipSnap family.

The protein resides in the mitochondrion matrix. In terms of biological role, protein involved in mitophagy. Accumulates on the mitochondria surface in response to mitochondrial depolarization and acts as a 'eat me' signal by recruiting proteins involved in selective autophagy. The polypeptide is Protein NipSnap homolog 2 (nipsnap2) (Danio rerio (Zebrafish)).